Reading from the N-terminus, the 367-residue chain is Ribosomal RNA large subunit methyltransferase M (367 aa).

Residues Ser189, 222 to 225 (CPGG), Asp241, Asp261, and Asp278 contribute to the S-adenosyl-L-methionine site. Residue Lys307 is the Proton acceptor of the active site.

Belongs to the class I-like SAM-binding methyltransferase superfamily. RNA methyltransferase RlmE family. RlmM subfamily. In terms of assembly, monomer.

The protein localises to the cytoplasm. It catalyses the reaction cytidine(2498) in 23S rRNA + S-adenosyl-L-methionine = 2'-O-methylcytidine(2498) in 23S rRNA + S-adenosyl-L-homocysteine + H(+). Its function is as follows. Catalyzes the 2'-O-methylation at nucleotide C2498 in 23S rRNA. This chain is Ribosomal RNA large subunit methyltransferase M, found in Shewanella denitrificans (strain OS217 / ATCC BAA-1090 / DSM 15013).